Consider the following 350-residue polypeptide: tRNA-splicing endonuclease (350 aa).

Residues tyrosine 286, histidine 297, and lysine 328 contribute to the active site.

This sequence belongs to the tRNA-intron endonuclease family. Archaeal long subfamily. As to quaternary structure, homodimer.

It carries out the reaction pretRNA = a 3'-half-tRNA molecule with a 5'-OH end + a 5'-half-tRNA molecule with a 2',3'-cyclic phosphate end + an intron with a 2',3'-cyclic phosphate and a 5'-hydroxyl terminus.. In terms of biological role, endonuclease that removes tRNA introns. Cleaves pre-tRNA at the 5'- and 3'-splice sites to release the intron. The products are an intron and two tRNA half-molecules bearing 2',3' cyclic phosphate and 5'-OH termini. Recognizes a pseudosymmetric substrate in which 2 bulged loops of 3 bases are separated by a stem of 4 bp. This Methanosarcina barkeri (strain Fusaro / DSM 804) protein is tRNA-splicing endonuclease.